We begin with the raw amino-acid sequence, 304 residues long: Urease accessory protein UreD 2 (304 aa).

This sequence belongs to the UreD family. In terms of assembly, ureD, UreF and UreG form a complex that acts as a GTP-hydrolysis-dependent molecular chaperone, activating the urease apoprotein by helping to assemble the nickel containing metallocenter of UreC. The UreE protein probably delivers the nickel.

Its subcellular location is the cytoplasm. Its function is as follows. Required for maturation of urease via the functional incorporation of the urease nickel metallocenter. In terms of biological role, disrupting the ure2 operon has no effect on urease activity or pathogen survival in BALB/c mice when administered orally. This is Urease accessory protein UreD 2 from Brucella abortus (strain 2308).